The primary structure comprises 174 residues: RNA pyrophosphohydrolase (174 aa).

The region spanning 6–149 is the Nudix hydrolase domain; it reads GYRPNVGIIL…KRDVYERALS (144 aa). The Nudix box motif lies at 38–59; the sequence is GGIKPGESPEAAMYRELLEEVG.

This sequence belongs to the Nudix hydrolase family. RppH subfamily. A divalent metal cation serves as cofactor.

Functionally, accelerates the degradation of transcripts by removing pyrophosphate from the 5'-end of triphosphorylated RNA, leading to a more labile monophosphorylated state that can stimulate subsequent ribonuclease cleavage. The chain is RNA pyrophosphohydrolase from Chromobacterium violaceum (strain ATCC 12472 / DSM 30191 / JCM 1249 / CCUG 213 / NBRC 12614 / NCIMB 9131 / NCTC 9757 / MK).